A 313-amino-acid chain; its full sequence is MRRGALLASALAAYAGYLALGALLVARLERPHEARLRAELGTLREQLLQHSPCVAAHALDAFVERVLAAGRLGRAALANASGAANASDPAWDFASALFFASTLVTTVGYGYTTPLTDAGKAFSIVFALLGVPITMLLLTASAQRLSLLLTHAPLSWLSLHWGWPPQRAARWHLVALLMVIVAIFFLVPAAVFAYLEEAWSFLDAFYFCFISLSTIGLGDYVPGEAPGQPYRALYKVLVTAYLFLGLVAMVLVLQTFRRVSDLHGLTELILLPDPDPASLSQDEDDQVAVLDARTDLHQHLSAASHADYASIPR.

Residues 1–4 (MRRG) lie on the Cytoplasmic side of the membrane. Residues 5-25 (ALLASALAAYAGYLALGALLV) form a helical membrane-spanning segment. Residues asparagine 79 and asparagine 85 are each glycosylated (N-linked (GlcNAc...) asparagine). The segment at residues 90–115 (AWDFASALFFASTLVTTVGYGYTTPL) is an intramembrane region (pore-forming). Residues threonine 106, valine 107, glycine 108, and tyrosine 109 each contribute to the K(+) site. Positions 106–111 (TVGYGY) are selectivity filter 1. A helical transmembrane segment spans residues 121-141 (AFSIVFALLGVPITMLLLTAS). Residues 142 to 172 (AQRLSLLLTHAPLSWLSLHWGWPPQRAARWH) lie on the Cytoplasmic side of the membrane. The helical transmembrane segment at 173–193 (LVALLMVIVAIFFLVPAAVFA) threads the bilayer. An intramembrane region (pore-forming) is located at residues 199 to 223 (WSFLDAFYFCFISLSTIGLGDYVPG). K(+) is bound by residues threonine 214, isoleucine 215, and glycine 216. The selectivity filter 2 stretch occupies residues 214 to 219 (TIGLGD). The helical transmembrane segment at 236 to 256 (VLVTAYLFLGLVAMVLVLQTF) threads the bilayer. Over 257-313 (RRVSDLHGLTELILLPDPDPASLSQDEDDQVAVLDARTDLHQHLSAASHADYASIPR) the chain is Cytoplasmic. 2 consecutive short sequence motifs (lysosomal targeting signal) follow at residues 282-290 (DEDDQVAVL) and 308-312 (YASIP).

The protein belongs to the two pore domain potassium channel (TC 1.A.1.8) family. In terms of assembly, homodimer; disulfide-linked. Post-translationally, N-glycosylation is necessary for targeting to lysosomes.

Its subcellular location is the late endosome membrane. It localises to the lysosome membrane. The enzyme catalyses K(+)(in) = K(+)(out). Functionally, k(+) channel that conducts outward rectifying currents at the membranes of the endolysosomal system. Active in lysosomes where it regulates lysosome numbers and size. In macrophages, enables K(+) efflux coupled to ATP-induced NLRP3 inflammasome activation upon bacterial infection. Cooperates with ATP-gated P2RX7 to activate NLRP3 inflammasome, with P2RX7 conducting Ca(2+) and Na(+) influx that sets the membrane potential for K(+) efflux. The sequence is that of Potassium channel subfamily K member 6 from Mus musculus (Mouse).